Reading from the N-terminus, the 208-residue chain is Tektin bundle-interacting protein 1 (208 aa).

Microtubule inner protein component of sperm flagellar doublet microtubules. Expressed in trachea multiciliated cells.

The protein resides in the cytoplasm. The protein localises to the cytoskeleton. It is found in the cilium axoneme. It localises to the flagellum axoneme. Microtubule inner protein (MIP) part of the dynein-decorated doublet microtubules (DMTs) in cilia axoneme, which is required for motile cilia beating. Located at the center of the tektin bundle where may function to recruit tektins or stabilize the bundle. The protein is Tektin bundle-interacting protein 1 (TEKTIP1) of Bos taurus (Bovine).